The sequence spans 504 residues: uncharacterized protein (504 aa).

Residues 6 to 26 traverse the membrane as a helical segment; that stretch reads NLFIIFIFLFLLSQVSAYITF.

To M.jannaschii MJ1506 and MJ1561.

It localises to the membrane. This is an uncharacterized protein from Methanocaldococcus jannaschii (strain ATCC 43067 / DSM 2661 / JAL-1 / JCM 10045 / NBRC 100440) (Methanococcus jannaschii).